Reading from the N-terminus, the 1105-residue chain is Pheromone-regulated membrane protein 10 (1105 aa).

The span at 1 to 11 shows a compositional bias: polar residues; the sequence is MSDNRPTYDTS. 6 disordered regions span residues 1 to 22, 36 to 55, 65 to 123, 151 to 278, 385 to 473, and 520 to 656; these read MSDN…NHFH, RKQN…TASN, GSNH…FYGD, IKPK…GGGL, AGAS…FLRG, and EQKS…LRHK. Low complexity predominate over residues 67 to 82; that stretch reads NHKFGNSINNNNNNAN. The span at 85 to 106 shows a compositional bias: polar residues; that stretch reads LGSSSAGTNRRSLISPTSSTHV. Positions 162-178 are enriched in acidic residues; that stretch reads DSSDDDGNNLDEVEDET. Over residues 185 to 197 the composition is skewed to polar residues; the sequence is LNQNHPPQQYYET. Positions 198–210 are enriched in acidic residues; it reads DSSDEDEEDDDEV. Positions 390-413 are enriched in polar residues; sequence LDHSQQSSAAPSTEITPSQSPNQH. Over residues 417–439 the composition is skewed to low complexity; the sequence is EKSNNNENNQQSTTVESSSSTSS. Residues 446 to 459 show a composition bias toward basic and acidic residues; that stretch reads LARRRASEERKKAE. Polar residues-rich tracts occupy residues 520–539, 592–606, and 624–633; these read EQKS…GTAL, RTNT…NSEE, and MNANLPSFQN. Helical transmembrane passes span 782-802, 809-829, 835-855, 860-880, 903-923, 938-958, 963-983, 986-1006, 1015-1035, and 1075-1095; these read PPWL…PFAF, LPIS…VSSI, SVFE…IGSI, LFCF…GYII, VIYS…YGWI, AIDE…LGLI, WSQV…SFFA, HFST…GVLG, GMAV…GIAS, and VEVS…IYPF.

This sequence belongs to the ThrE exporter (TC 2.A.79) family.

The protein resides in the membrane. This Candida albicans (strain SC5314 / ATCC MYA-2876) (Yeast) protein is Pheromone-regulated membrane protein 10 (PRM10).